A 225-amino-acid polypeptide reads, in one-letter code: Heptaprenylglyceryl phosphate synthase (225 aa).

Lys6 is a sn-glycerol 1-phosphate binding site. The Mg(2+) site is built by Asp8 and Thr34. Sn-glycerol 1-phosphate-binding positions include Tyr153–Gly158, Gly183, and Gly203–Asn204.

Belongs to the GGGP/HepGP synthase family. Group I subfamily. Homodimer. Mg(2+) serves as cofactor.

The catalysed reaction is sn-glycerol 1-phosphate + all-trans-heptaprenyl diphosphate = 3-heptaprenyl-sn-glycero-1-phosphate + diphosphate. The protein operates within membrane lipid metabolism; glycerophospholipid metabolism. In terms of biological role, prenyltransferase that catalyzes in vivo the transfer of the heptaprenyl moiety of heptaprenyl pyrophosphate (HepPP; 35 carbon atoms) to the C3 hydroxyl of sn-glycerol-1-phosphate (G1P), producing heptaprenylglyceryl phosphate (HepGP). This reaction is an ether-bond-formation step in the biosynthesis of archaea-type G1P-based membrane lipids found in Bacillales. The chain is Heptaprenylglyceryl phosphate synthase from Listeria monocytogenes serotype 4b (strain F2365).